Here is a 485-residue protein sequence, read N- to C-terminus: uncharacterized protein (485 aa).

11 consecutive transmembrane segments (helical) span residues 79–99 (LVTLGATLYTLGILFGNLIFA), 117–137 (VFALLQIPIALSVNLAMFLVF), 139–159 (FFSGLFGSVGLSNGSGSLADL), 170–190 (VIYFTVLSIGPGIAPIISGFI), 199–219 (WEFWILLILSGFNLFWAFLLL), 275–295 (ILICVACTIGSIYGMINLVLI), 313–333 (GLMYISITLGLFSAVFIAMPI), 355–375 (LPMGFIGITLFEIGILLFGWT), 380–400 (IFWFVPTIGSAIMGGGYIMTS), 421–441 (GVKIFQLLFGAIFPLFAESLF), and 448–468 (WGCTLLAFILLACGCSLPILF).

This sequence belongs to the major facilitator superfamily. CAR1 family.

The protein resides in the membrane. This is an uncharacterized protein from Schizosaccharomyces pombe (strain 972 / ATCC 24843) (Fission yeast).